A 628-amino-acid chain; its full sequence is (+)-alpha pinene synthase 1, chloroplastic (628 aa).

The N-terminal 18 residues, 1-18 (MALVSAVPLNSKLCLCRT), are a transit peptide targeting the chloroplast. Residues Asp379, Asp383, and Asp531 each contribute to the Mg(2+) site. The DDXXD motif signature appears at 379–383 (DDIYD).

It belongs to the terpene synthase family. Tpsd subfamily. Mg(2+) is required as a cofactor. The cofactor is Mn(2+).

The protein resides in the plastid. It localises to the chloroplast. It catalyses the reaction (2E)-geranyl diphosphate = (1R,5R)-alpha-pinene + diphosphate. It functions in the pathway terpene metabolism; oleoresin biosynthesis. The protein operates within secondary metabolite biosynthesis; terpenoid biosynthesis. In terms of biological role, monoterpene synthase (TPS) involved in the biosynthesis of monoterpene natural products included in conifer oleoresin secretions and volatile emissions; these compounds contribute to biotic and abiotic stress defense against herbivores and pathogens. Catalyzes the conversion of (2E)-geranyl diphosphate (GPP) to (+)-alpha-pinene. In Pinus banksiana (Jack pine), this protein is (+)-alpha pinene synthase 1, chloroplastic.